A 239-amino-acid polypeptide reads, in one-letter code: Prolyl hydroxylase EGLN3 (239 aa).

The tract at residues 62–73 is beta(2)beta(3) 'finger-like' loop; the sequence is AGPRAGVSKRHL. The tract at residues 88 to 104 is required for interaction with ADRB2; the sequence is CEAISFLLSLIDRLVLY. In terms of domain architecture, Fe2OG dioxygenase spans 116–214; that stretch reads ERSKAMVACY…RYAMTVWYFD (99 aa). Fe cation is bound by residues histidine 135, aspartate 137, and histidine 196. Arginine 205 contacts 2-oxoglutarate.

In terms of assembly, interacts with BCL2 (via its BH4 domain); the interaction disrupts the BAX-BCL4 complex inhibiting the anti-apoptotic activity of BCL2. Interacts with WDR83; the interaction leads to almost complete elimination of HIF-mediated reporter activity. Interacts with ADRB2; the interaction hydroxylates ADRB2 facilitating its ubiquitination by the VHL-E3 ligase complex. Interacts with PAX2; the interaction targets PAX2 for destruction. Interacts with PKM; the interaction hydroxylates PKM in hypoxia. Interacts with LIMD1, WTIP and AJUBA. The cofactor is Fe(2+). L-ascorbate is required as a cofactor. Ubiquitinated by SIAH1 and/or SIAH2 in response to the unfolded protein response (UPR), leading to its degradation. As to expression, widely expressed at low levels. Expressed at higher levels in adult heart (cardiac myocytes, aortic endothelial cells and coronary artery smooth muscle), lung and placenta, and in fetal spleen, heart and skeletal muscle. Also expressed in pancreas. Localized to pancreatic acini and islet cells.

It is found in the nucleus. Its subcellular location is the cytoplasm. The catalysed reaction is L-prolyl-[protein] + 2-oxoglutarate + O2 = trans-4-hydroxy-L-prolyl-[protein] + succinate + CO2. It carries out the reaction L-prolyl-[hypoxia-inducible factor alpha subunit] + 2-oxoglutarate + O2 = trans-4-hydroxy-L-prolyl-[hypoxia-inducible factor alpha subunit] + succinate + CO2. With respect to regulation, activated in cardiovascular cells and Hela cells following exposure to hypoxia. Inhibited by polynitrogen compounds probably by chelation to Fe(2+) ions. In terms of biological role, prolyl hydroxylase that mediates hydroxylation of proline residues in target proteins, such as PKM, TELO2, ATF4 and HIF1A. Target proteins are preferentially recognized via a LXXLAP motif. Cellular oxygen sensor that catalyzes, under normoxic conditions, the post-translational formation of 4-hydroxyproline in hypoxia-inducible factor (HIF) alpha proteins. Hydroxylates a specific proline found in each of the oxygen-dependent degradation (ODD) domains (N-terminal, NODD, and C-terminal, CODD) of HIF1A. Also hydroxylates HIF2A. Has a preference for the CODD site for both HIF1A and HIF2A. Hydroxylation on the NODD site by EGLN3 appears to require prior hydroxylation on the CODD site. Hydroxylated HIFs are then targeted for proteasomal degradation via the von Hippel-Lindau ubiquitination complex. Under hypoxic conditions, the hydroxylation reaction is attenuated allowing HIFs to escape degradation resulting in their translocation to the nucleus, heterodimerization with HIF1B, and increased expression of hypoxy-inducible genes. ELGN3 is the most important isozyme in limiting physiological activation of HIFs (particularly HIF2A) in hypoxia. Also hydroxylates PKM in hypoxia, limiting glycolysis. Under normoxia, hydroxylates and regulates the stability of ADRB2. Regulator of cardiomyocyte and neuronal apoptosis. In cardiomyocytes, inhibits the anti-apoptotic effect of BCL2 by disrupting the BAX-BCL2 complex. In neurons, has a NGF-induced proapoptotic effect, probably through regulating CASP3 activity. Also essential for hypoxic regulation of neutrophilic inflammation. Plays a crucial role in DNA damage response (DDR) by hydroxylating TELO2, promoting its interaction with ATR which is required for activation of the ATR/CHK1/p53 pathway. Also mediates hydroxylation of ATF4, leading to decreased protein stability of ATF4. The protein is Prolyl hydroxylase EGLN3 of Homo sapiens (Human).